Here is a 226-residue protein sequence, read N- to C-terminus: MNPILINKLQRKLGYTFTHSELLQQALTHRSASSKHNERLEFLGDSILSYVIANALYHRFPRVDEGDMSRMRATLVRGNTLAEMAREFDLGECLRLGPGELKSGGFRRESILADTVEALIGGVFLDSDIQTVEKLILDWYQTRLDEISPGDKQKDPKTRLQEYLQGRHLPLPSYLVVQVRGEAHDQEFTIHCQVSGMAEPVVGVGSSRRKAEQAAAEQALIKLGLE.

In terms of domain architecture, RNase III spans 6-128 (INKLQRKLGY…LIGGVFLDSD (123 aa)). Mg(2+) is bound at residue glutamate 41. Aspartate 45 is a catalytic residue. Mg(2+) is bound by residues aspartate 114 and glutamate 117. Residue glutamate 117 is part of the active site. The 71-residue stretch at 155–225 (DPKTRLQEYL…AEQALIKLGL (71 aa)) folds into the DRBM domain.

This sequence belongs to the ribonuclease III family. Homodimer. Mg(2+) serves as cofactor.

The protein localises to the cytoplasm. The catalysed reaction is Endonucleolytic cleavage to 5'-phosphomonoester.. Functionally, digests double-stranded RNA. Involved in the processing of primary rRNA transcript to yield the immediate precursors to the large and small rRNAs (23S and 16S). Processes some mRNAs, and tRNAs when they are encoded in the rRNA operon. Processes pre-crRNA and tracrRNA of type II CRISPR loci if present in the organism. This Pantoea ananatis (strain LMG 20103) protein is Ribonuclease 3 (rnc).